Reading from the N-terminus, the 352-residue chain is Photosystem II D2 protein (352 aa).

The helical transmembrane segment at C40–T60 threads the bilayer. Residue H117 coordinates chlorophyll a. Residues G124–P140 traverse the membrane as a helical segment. The pheophytin a site is built by Q129 and N142. Residues V152–S165 traverse the membrane as a helical segment. Chlorophyll a is bound at residue H197. The chain crosses the membrane as a helical span at residues G207–E227. Residues H214 and F261 each contribute to the a plastoquinone site. H214 is a Fe cation binding site. H268 is a binding site for Fe cation. Residues G278 to R294 traverse the membrane as a helical segment.

The protein belongs to the reaction center PufL/M/PsbA/D family. In terms of assembly, PSII is composed of 1 copy each of membrane proteins PsbA, PsbB, PsbC, PsbD, PsbE, PsbF, PsbH, PsbI, PsbJ, PsbK, PsbL, PsbM, PsbT, PsbX, PsbY, PsbZ, Psb30/Ycf12, peripheral proteins PsbO, CyanoQ (PsbQ), PsbU, PsbV and a large number of cofactors. It forms dimeric complexes. The D1/D2 heterodimer binds P680, chlorophylls that are the primary electron donor of PSII, and subsequent electron acceptors. It shares a non-heme iron and each subunit binds pheophytin, quinone, additional chlorophylls, carotenoids and lipids. There is also a Cl(-1) ion associated with D1 and D2, which is required for oxygen evolution. The PSII complex binds additional chlorophylls, carotenoids and specific lipids. is required as a cofactor.

It is found in the cellular thylakoid membrane. It carries out the reaction 2 a plastoquinone + 4 hnu + 2 H2O = 2 a plastoquinol + O2. In terms of biological role, photosystem II (PSII) is a light-driven water:plastoquinone oxidoreductase that uses light energy to abstract electrons from H(2)O, generating O(2) and a proton gradient subsequently used for ATP formation. It consists of a core antenna complex that captures photons, and an electron transfer chain that converts photonic excitation into a charge separation. The D1/D2 (PsbA/PsbD) reaction center heterodimer binds P680, the primary electron donor of PSII as well as several subsequent electron acceptors. D2 is needed for assembly of a stable PSII complex. This chain is Photosystem II D2 protein, found in Synechococcus sp. (strain JA-3-3Ab) (Cyanobacteria bacterium Yellowstone A-Prime).